The sequence spans 616 residues: Dihydroxy-acid dehydratase (616 aa).

Residue Asp-81 participates in Mg(2+) binding. Cys-122 contacts [2Fe-2S] cluster. The Mg(2+) site is built by Asp-123 and Lys-124. N6-carboxylysine is present on Lys-124. Position 195 (Cys-195) interacts with [2Fe-2S] cluster. Glu-491 is a binding site for Mg(2+). Ser-517 acts as the Proton acceptor in catalysis.

It belongs to the IlvD/Edd family. Homodimer. It depends on [2Fe-2S] cluster as a cofactor. Mg(2+) is required as a cofactor.

It carries out the reaction (2R)-2,3-dihydroxy-3-methylbutanoate = 3-methyl-2-oxobutanoate + H2O. It catalyses the reaction (2R,3R)-2,3-dihydroxy-3-methylpentanoate = (S)-3-methyl-2-oxopentanoate + H2O. The protein operates within amino-acid biosynthesis; L-isoleucine biosynthesis; L-isoleucine from 2-oxobutanoate: step 3/4. It functions in the pathway amino-acid biosynthesis; L-valine biosynthesis; L-valine from pyruvate: step 3/4. Its function is as follows. Functions in the biosynthesis of branched-chain amino acids. Catalyzes the dehydration of (2R,3R)-2,3-dihydroxy-3-methylpentanoate (2,3-dihydroxy-3-methylvalerate) into 2-oxo-3-methylpentanoate (2-oxo-3-methylvalerate) and of (2R)-2,3-dihydroxy-3-methylbutanoate (2,3-dihydroxyisovalerate) into 2-oxo-3-methylbutanoate (2-oxoisovalerate), the penultimate precursor to L-isoleucine and L-valine, respectively. This chain is Dihydroxy-acid dehydratase, found in Erwinia tasmaniensis (strain DSM 17950 / CFBP 7177 / CIP 109463 / NCPPB 4357 / Et1/99).